The following is a 670-amino-acid chain: Soluble lamin-associated protein of 75 kDa (670 aa).

2 disordered regions span residues 273-301 (PKRP…SSEM) and 314-670 (STSE…AKLT). Serine 350 is modified (phosphoserine). A compositionally biased stretch (polar residues) spans 358 to 375 (SQTSLTASINKLESTARP). Residues 378 to 387 (SSEEFLEEEP) show a composition bias toward acidic residues. Serine 379 carries the post-translational modification Phosphoserine. Positions 414-423 (EKQDGEKESE) are enriched in basic and acidic residues. Positions 442–453 (TEEEDSTSEVLD) are enriched in acidic residues. The residue at position 449 (serine 449) is a Phosphoserine. A compositionally biased stretch (polar residues) spans 460-470 (PFNSSEDSTNL). Composition is skewed to basic and acidic residues over residues 479–494 (KPPE…RIPD) and 504–514 (SDEKGHMEEKL). Serine 515 is subject to Phosphoserine. Polar residues-rich tracts occupy residues 558–569 (ENLSPNTTSSLE) and 579–591 (PQET…QSSL). A phosphoserine mark is found at serine 615, serine 618, and serine 635. Residues 651-670 (NLRRKAKGHKGPAKKKAKLT) are compositionally biased toward basic residues.

It belongs to the FAM169 family.

It is found in the nucleus envelope. The protein localises to the nucleus inner membrane. This Homo sapiens (Human) protein is Soluble lamin-associated protein of 75 kDa (FAM169A).